The chain runs to 262 residues: MSDALIRLDKVAVTLSGQNVLDDIQLSVKPGEIVTLIGPNGAGKTTLVRAVLGLLKPDSGTVWRKPKLRVGYMPQKLHVDQTLPLSVLRFLRLVPGVDRTAAASALEEVGAGKVIDSPIQGISGGEMQRVLLARALLRKPELLVLDEPVQGVDVAGQAELYSLITRLRDRHRCGVLMVSHDLHLVMSTTDQVVCLNRHVCCSGHPEQVSHDPAFVELFGKNAQSLAIYHHHHDHAHDLHGAVVNDAAPLSHTHVHGDSCKHG.

In terms of domain architecture, ABC transporter spans 6-221 (IRLDKVAVTL…PAFVELFGKN (216 aa)). 38–45 (GPNGAGKT) contacts ATP.

Belongs to the ABC transporter superfamily. Zinc importer (TC 3.A.1.15.5) family. In terms of assembly, the complex is composed of two ATP-binding proteins (ZnuC), two transmembrane proteins (ZnuB) and a solute-binding protein (ZnuA).

Its subcellular location is the cell inner membrane. It carries out the reaction Zn(2+)(out) + ATP(in) + H2O(in) = Zn(2+)(in) + ADP(in) + phosphate(in) + H(+)(in). In terms of biological role, part of the ABC transporter complex ZnuABC involved in zinc import. Responsible for energy coupling to the transport system. The chain is Zinc import ATP-binding protein ZnuC from Pseudomonas syringae pv. syringae (strain B728a).